The primary structure comprises 223 residues: MNKPLLWISVLTSLLEAFAHTDLSGKVFVFPRESVTDHVNLITPLEKPLQNFTLCFRAYSDLSRAYSLFSYNTQGRDNELLVYKERVGEYSLYIGRHKVTSKVIEKFPAPVHICVSWESSSGIAEFWINGTPLVKKGLRQGYFVEAQPKIVLGQEQDSYGGKFDRSQSFVGEIGDLYMWDSVLPPENILSAYQGTPLPANILDWQALNYEIRGYVIIKPLVWV.

An N-terminal signal peptide occupies residues 1–19 (MNKPLLWISVLTSLLEAFA). A Pentraxin (PTX) domain is found at 24–223 (SGKVFVFPRE…YVIIKPLVWV (200 aa)). An N-linked (GlcNAc...) asparagine glycan is attached at Asn-51. A disulfide bond links Cys-55 and Cys-114. Ca(2+) contacts are provided by Asp-77, Asn-78, Glu-155, Gln-156, Asp-157, and Gln-167.

It belongs to the pentraxin family. In terms of assembly, homopentamer. Pentraxin (or pentaxin) have a discoid arrangement of 5 non-covalently bound subunits. The cofactor is Ca(2+). Post-translationally, N-glycosylated with a complex biantennary oligosaccharide chain with a sialic acid at the end (disialo-SAP). Monosialo-SAP as well as asioalo-SAP are also detected. As to expression, found in serum and urine.

Its subcellular location is the secreted. In terms of biological role, can interact with DNA and histones and may scavenge nuclear material released from damaged circulating cells. May also function as a calcium-dependent lectin. In Homo sapiens (Human), this protein is Serum amyloid P-component (APCS).